The primary structure comprises 796 residues: ER degradation-enhancing alpha-mannosidase-like protein 1 (796 aa).

Residues 1–20 (MVCCLWVLLALLLHLDHVAC) form the signal peptide. N86 carries N-linked (GlcNAc...) asparagine glycosylation. The active-site Proton donor is the E372. T495 lines the Ca(2+) pocket. N-linked (GlcNAc...) asparagine glycans are attached at residues N517, N672, and N762.

This sequence belongs to the glycosyl hydrolase 47 family. In terms of assembly, interacts with PDI1. The cofactor is Ca(2+).

The protein resides in the endoplasmic reticulum lumen. The catalysed reaction is Hydrolysis of terminal, non-reducing alpha-D-mannose residues in alpha-D-mannosides.. It participates in protein modification; protein glycosylation. Functionally, alpha-1,2-specific exomannosidase involved in endoplasmic reticulum-associated degradation (ERAD). Delivers misfolded glycoproteins to proteasomes. Forms a complex with PDI1 to process unfolded protein-bound Man8GlcNAc2 oligosaccharides to Man7GlcNAc2, promoting degradation in unfolded protein response. The chain is ER degradation-enhancing alpha-mannosidase-like protein 1 (MNL1) from Saccharomyces cerevisiae (strain ATCC 204508 / S288c) (Baker's yeast).